Reading from the N-terminus, the 763-residue chain is Photosystem I P700 chlorophyll a apoprotein A1 (763 aa).

Helical transmembrane passes span Ile72–Ala95, Leu158–His181, Leu197–Leu221, Thr305–Tyr323, Trp360–Tyr383, Leu399–Val425, Ala447–His469, and Phe544–Leu562. Residues Cys586 and Cys595 each coordinate [4Fe-4S] cluster. The next 2 helical transmembrane spans lie at His602 to Trp623 and Thr677 to Phe699. His688 contributes to the chlorophyll a' binding site. Chlorophyll a contacts are provided by Met696 and Tyr704. Trp705 is a phylloquinone binding site. Residues Ala737 to Ala757 form a helical membrane-spanning segment.

This sequence belongs to the PsaA/PsaB family. As to quaternary structure, the PsaA/B heterodimer binds the P700 chlorophyll special pair and subsequent electron acceptors. PSI consists of a core antenna complex that captures photons, and an electron transfer chain that converts photonic excitation into a charge separation. The cyanobacterial PSI reaction center is composed of one copy each of PsaA,B,C,D,E,F,I,J,K,L,M and X, and forms trimeric complexes. PSI electron transfer chain: 5 chlorophyll a, 1 chlorophyll a', 2 phylloquinones and 3 4Fe-4S clusters. PSI core antenna: 90 chlorophyll a, 22 carotenoids, 3 phospholipids and 1 galactolipid. P700 is a chlorophyll a/chlorophyll a' dimer, A0 is one or more chlorophyll a, A1 is one or both phylloquinones and FX is a shared 4Fe-4S iron-sulfur center. serves as cofactor.

The protein resides in the cellular thylakoid membrane. It catalyses the reaction reduced [plastocyanin] + hnu + oxidized [2Fe-2S]-[ferredoxin] = oxidized [plastocyanin] + reduced [2Fe-2S]-[ferredoxin]. Its function is as follows. PsaA and PsaB bind P700, the primary electron donor of photosystem I (PSI), as well as the electron acceptors A0, A1 and FX. PSI is a plastocyanin/cytochrome c6-ferredoxin oxidoreductase, converting photonic excitation into a charge separation, which transfers an electron from the donor P700 chlorophyll pair to the spectroscopically characterized acceptors A0, A1, FX, FA and FB in turn. Oxidized P700 is reduced on the lumenal side of the thylakoid membrane by plastocyanin or cytochrome c6. The protein is Photosystem I P700 chlorophyll a apoprotein A1 of Synechococcus elongatus (strain ATCC 33912 / PCC 7942 / FACHB-805) (Anacystis nidulans R2).